The chain runs to 193 residues: CASP-like protein 1F3 (193 aa).

The disordered stretch occupies residues 1 to 25; that stretch reads MASPQNTSQKRFFQANSPGGMPTAS. Residues 1–35 are Cytoplasmic-facing; sequence MASPQNTSQKRFFQANSPGGMPTASQSQRSRILAQ. A helical transmembrane segment spans residues 36–56; it reads ITLRFLAIAFTVTAIPVMITA. The Extracellular portion of the chain corresponds to 57–78; that stretch reads KEPVSLLGLAITPSYKQSSAMK. The chain crosses the membrane as a helical span at residues 79 to 99; the sequence is FLLGVNATVFAFTALSMLFVW. The Cytoplasmic segment spans residues 100-118; the sequence is PLRRSGSKPINYFFLHLHD. The chain crosses the membrane as a helical span at residues 119–139; it reads MVMTLLLISGCAAATAVGYLS. Residues 140 to 161 are Extracellular-facing; sequence QYGQPETYWSPICDIVKKFCHQ. Residues 162–182 traverse the membrane as a helical segment; sequence MLISTVLSYLAFFCYLALNIL. Over 183-193 the chain is Cytoplasmic; that stretch reads SVHKLMSRATE.

The protein belongs to the Casparian strip membrane proteins (CASP) family. As to quaternary structure, homodimer and heterodimers.

The protein localises to the cell membrane. This is CASP-like protein 1F3 from Populus trichocarpa (Western balsam poplar).